A 141-amino-acid chain; its full sequence is Hemoglobin subunit alpha (141 aa).

The Globin domain maps to 1–141 (VLSDEDKTNV…VSTVLTSKYR (141 aa)). Phosphoserine is present on serine 3. The residue at position 7 (lysine 7) is an N6-succinyllysine. Threonine 8 bears the Phosphothreonine mark. Lysine 11 carries the post-translational modification N6-succinyllysine. Lysine 16 carries the post-translational modification N6-acetyllysine; alternate. Lysine 16 bears the N6-succinyllysine; alternate mark. Tyrosine 24 is subject to Phosphotyrosine. The residue at position 35 (serine 35) is a Phosphoserine. Lysine 40 bears the N6-succinyllysine mark. Serine 49 carries the phosphoserine modification. Histidine 58 contacts O2. Residue histidine 87 coordinates heme b. Position 102 is a phosphoserine (serine 102). Threonine 108 bears the Phosphothreonine mark. Serine 124 and serine 131 each carry phosphoserine. A phosphothreonine mark is found at threonine 134 and threonine 137. Serine 138 is subject to Phosphoserine.

The protein belongs to the globin family. As to quaternary structure, heterotetramer of two alpha chains and two beta chains. As to expression, red blood cells.

Involved in oxygen transport from the lung to the various peripheral tissues. Functionally, hemopressin acts as an antagonist peptide of the cannabinoid receptor CNR1. Hemopressin-binding efficiently blocks cannabinoid receptor CNR1 and subsequent signaling. This chain is Hemoglobin subunit alpha (HBA), found in Trichechus inunguis (Amazon manatee).